Consider the following 157-residue polypeptide: D-aminoacyl-tRNA deacylase (157 aa).

A Gly-cisPro motif, important for rejection of L-amino acids motif is present at residues 137 to 138; it reads GP.

This sequence belongs to the DTD family. Homodimer.

The protein resides in the cytoplasm. The catalysed reaction is glycyl-tRNA(Ala) + H2O = tRNA(Ala) + glycine + H(+). The enzyme catalyses a D-aminoacyl-tRNA + H2O = a tRNA + a D-alpha-amino acid + H(+). Its function is as follows. An aminoacyl-tRNA editing enzyme that deacylates mischarged D-aminoacyl-tRNAs. Also deacylates mischarged glycyl-tRNA(Ala), protecting cells against glycine mischarging by AlaRS. Acts via tRNA-based rather than protein-based catalysis; rejects L-amino acids rather than detecting D-amino acids in the active site. By recycling D-aminoacyl-tRNA to D-amino acids and free tRNA molecules, this enzyme counteracts the toxicity associated with the formation of D-aminoacyl-tRNA entities in vivo and helps enforce protein L-homochirality. The sequence is that of D-aminoacyl-tRNA deacylase from Cyanothece sp. (strain PCC 7425 / ATCC 29141).